Here is a 219-residue protein sequence, read N- to C-terminus: Urease subunit gamma/beta (219 aa).

The interval 1-101 (MFLTPREQEK…LVTVRNPIKS (101 aa)) is urease gamma. The interval 102 to 219 (SKKTLNTYII…IKRAKERGFA (118 aa)) is urease beta.

This sequence in the N-terminal section; belongs to the urease gamma subunit family. The protein in the C-terminal section; belongs to the urease beta subunit family. In terms of assembly, heterohexamer of 3 UreC (alpha) and 3 UreAB (gamma/beta) subunits.

The protein localises to the cytoplasm. The enzyme catalyses urea + 2 H2O + H(+) = hydrogencarbonate + 2 NH4(+). Its pathway is nitrogen metabolism; urea degradation; CO(2) and NH(3) from urea (urease route): step 1/1. This is Urease subunit gamma/beta from Sulfurisphaera tokodaii (strain DSM 16993 / JCM 10545 / NBRC 100140 / 7) (Sulfolobus tokodaii).